The chain runs to 379 residues: Cobalt-precorrin-5B C(1)-methyltransferase (379 aa).

It belongs to the CbiD family.

It catalyses the reaction Co-precorrin-5B + S-adenosyl-L-methionine = Co-precorrin-6A + S-adenosyl-L-homocysteine. It functions in the pathway cofactor biosynthesis; adenosylcobalamin biosynthesis; cob(II)yrinate a,c-diamide from sirohydrochlorin (anaerobic route): step 6/10. Functionally, catalyzes the methylation of C-1 in cobalt-precorrin-5B to form cobalt-precorrin-6A. The chain is Cobalt-precorrin-5B C(1)-methyltransferase from Salmonella typhimurium (strain LT2 / SGSC1412 / ATCC 700720).